Here is a 365-residue protein sequence, read N- to C-terminus: Putative agmatine deiminase (365 aa).

Agmatine contacts are provided by Glu214 and Asp220. Cys357 acts as the Amidino-cysteine intermediate in catalysis.

It belongs to the agmatine deiminase family. As to quaternary structure, tetramer of two homodimers.

The enzyme catalyses agmatine + H2O = N-carbamoylputrescine + NH4(+). This Enterococcus faecalis (strain ATCC 700802 / V583) protein is Putative agmatine deiminase.